Reading from the N-terminus, the 1035-residue chain is Enteropeptidase (1035 aa).

The N-myristoyl glycine moiety is linked to residue glycine 2. Residues glycine 2–glutamate 18 lie on the Cytoplasmic side of the membrane. The chain crosses the membrane as a helical; Signal-anchor for type II membrane protein span at residues valine 19–valine 47. At lysine 48 to histidine 1035 the chain is on the extracellular side. Residues lysine 54 to glutamate 169 form the SEA domain. Asparagine 116, asparagine 147, asparagine 170, and asparagine 194 each carry an N-linked (GlcNAc...) asparagine glycan. The region spanning isoleucine 197–threonine 238 is the LDL-receptor class A 1 domain. Cystine bridges form between cysteine 199–cysteine 212, cysteine 206–cysteine 225, cysteine 219–cysteine 236, and cysteine 240–cysteine 269. 9 N-linked (GlcNAc...) asparagine glycosylation sites follow: asparagine 233, asparagine 263, asparagine 264, asparagine 404, asparagine 456, asparagine 486, asparagine 519, asparagine 550, and asparagine 646. One can recognise a CUB 1 domain in the interval cysteine 240–phenylalanine 350. Residues tyrosine 358–valine 520 enclose the MAM domain. Cysteine 540 and cysteine 568 are joined by a disulfide. The CUB 2 domain maps to cysteine 540–glycine 650. The 39-residue stretch at glutamate 657–arginine 695 folds into the LDL-receptor class A 2 domain. Cystine bridges form between cysteine 659-cysteine 671, cysteine 666-cysteine 684, and cysteine 678-cysteine 693. Residues valine 694–serine 787 enclose the SRCR domain. Asparagine 698, asparagine 722, asparagine 741, and asparagine 762 each carry an N-linked (GlcNAc...) asparagine glycan. 6 cysteine pairs are disulfide-bonded: cysteine 773–cysteine 783, cysteine 788–cysteine 912, cysteine 826–cysteine 842, cysteine 926–cysteine 993, cysteine 957–cysteine 972, and cysteine 983–cysteine 1011. The Peptidase S1 domain occupies isoleucine 801–histidine 1035. Histidine 841 serves as the catalytic Charge relay system. N-linked (GlcNAc...) asparagine glycosylation occurs at asparagine 864. The active-site Charge relay system is the aspartate 892. N-linked (GlcNAc...) asparagine glycosylation is found at asparagine 903 and asparagine 965. Residue serine 987 is the Charge relay system of the active site.

This sequence belongs to the peptidase S1 family. In terms of assembly, heterodimer of a catalytic (light) chain and a multidomain (heavy) chain linked by a disulfide bond. Post-translationally, the chains are derived from a single precursor that is cleaved by a trypsin-like protease. As to expression, intestinal brush border.

The protein localises to the membrane. It catalyses the reaction Activation of trypsinogen by selective cleavage of 6-Lys-|-Ile-7 bond.. In terms of biological role, responsible for initiating activation of pancreatic proteolytic proenzymes (trypsin, chymotrypsin and carboxypeptidase A). It catalyzes the conversion of trypsinogen to trypsin which in turn activates other proenzymes including chymotrypsinogen, procarboxypeptidases, and proelastases. In Bos taurus (Bovine), this protein is Enteropeptidase (TMPRSS15).